A 375-amino-acid chain; its full sequence is Pectate lyase C (375 aa).

A signal peptide spans 1-22 (MKSLITPITAGLLLALSQPLLA). Residues C94 and C177 are joined by a disulfide bond. Ca(2+) contacts are provided by D151, D153, E188, and D192. R240 is an active-site residue. C351 and C374 are joined by a disulfide.

It belongs to the polysaccharide lyase 1 family. PLADES subfamily. The cofactor is Ca(2+).

The protein localises to the secreted. The catalysed reaction is Eliminative cleavage of (1-&gt;4)-alpha-D-galacturonan to give oligosaccharides with 4-deoxy-alpha-D-galact-4-enuronosyl groups at their non-reducing ends.. Its pathway is glycan metabolism; pectin degradation; 2-dehydro-3-deoxy-D-gluconate from pectin: step 2/5. In terms of biological role, involved in maceration and soft-rotting of plant tissue. The polypeptide is Pectate lyase C (Dickeya chrysanthemi (Pectobacterium chrysanthemi)).